Consider the following 212-residue polypeptide: Pyridoxine/pyridoxamine 5'-phosphate oxidase (212 aa).

Residues Arg-9–Tyr-12 and Lys-67 each bind substrate. FMN-binding positions include Arg-62–Lys-67, Phe-77–Thr-78, Arg-83, and Lys-84. Residues Tyr-124, Arg-128, and Ser-132 each coordinate substrate. Residues Gln-141–Ser-142 and Trp-185 each bind FMN. Arg-191–His-193 lines the substrate pocket. Arg-195 is a binding site for FMN.

It belongs to the pyridoxamine 5'-phosphate oxidase family. As to quaternary structure, homodimer. Requires FMN as cofactor.

The catalysed reaction is pyridoxamine 5'-phosphate + O2 + H2O = pyridoxal 5'-phosphate + H2O2 + NH4(+). The enzyme catalyses pyridoxine 5'-phosphate + O2 = pyridoxal 5'-phosphate + H2O2. The protein operates within cofactor metabolism; pyridoxal 5'-phosphate salvage; pyridoxal 5'-phosphate from pyridoxamine 5'-phosphate: step 1/1. It functions in the pathway cofactor metabolism; pyridoxal 5'-phosphate salvage; pyridoxal 5'-phosphate from pyridoxine 5'-phosphate: step 1/1. In terms of biological role, catalyzes the oxidation of either pyridoxine 5'-phosphate (PNP) or pyridoxamine 5'-phosphate (PMP) into pyridoxal 5'-phosphate (PLP). This Verminephrobacter eiseniae (strain EF01-2) protein is Pyridoxine/pyridoxamine 5'-phosphate oxidase.